Here is a 279-residue protein sequence, read N- to C-terminus: UTP--glucose-1-phosphate uridylyltransferase (279 aa).

Belongs to the UDPGP type 2 family.

The catalysed reaction is alpha-D-glucose 1-phosphate + UTP + H(+) = UDP-alpha-D-glucose + diphosphate. Its function is as follows. May play a role in stationary phase survival. The sequence is that of UTP--glucose-1-phosphate uridylyltransferase (galU) from Pseudomonas aeruginosa (strain ATCC 15692 / DSM 22644 / CIP 104116 / JCM 14847 / LMG 12228 / 1C / PRS 101 / PAO1).